Here is a 404-residue protein sequence, read N- to C-terminus: 26S proteasome regulatory subunit 6A-B (404 aa).

192–199 (GPPGTGKT) lines the ATP pocket.

Belongs to the AAA ATPase family. In terms of assembly, may form a heterodimer with a related family member.

The protein localises to the cytoplasm. It localises to the nucleus. In terms of biological role, the 26S proteasome is involved in the ATP-dependent degradation of ubiquitinated proteins. The regulatory (or ATPase) complex confers ATP dependency and substrate specificity to the 26S complex. This is 26S proteasome regulatory subunit 6A-B (psmc3-b) from Xenopus laevis (African clawed frog).